Reading from the N-terminus, the 419-residue chain is MRKIVINGGKPLKGEVAVSGAKNSVVALIPAIILADDIVTLDGVPAISDVDSLIDIMTLMGASVECDGDSLKIDPRGVKDIPMPYGKINSLRASYYFYSSLLGRFGRAVVGLPGGCDLGPRPIDLHLKAFKAMGATVSYEGEAMRLSTEGKPLKGAHIYMDTVSVGATINTMIAASKAQGRTVIENAAREPEIIDIATLLNNMGAHIRGAGTDMIIIEGVEKLHGTRHQVIPDRIEAGSYIALAAAVGEGIKVTNVLYEHLESFISKLEEMGVRMTIEEDSVFVEKQDKLKAVSIKTSPYPGFATDLQQPITPLLLTAVGRGKIRDTIYEKRVNHVAELARMGAKISVLGGQIIYEGPNELSGAPVKATDLRAGAALVTAGLMAKGQTVITNIEFILRGYSDIIQKLNRLGADIEIVEE.

22–23 (KN) contacts phosphoenolpyruvate. Residue arginine 92 participates in UDP-N-acetyl-alpha-D-glucosamine binding. The active-site Proton donor is cysteine 116. A 2-(S-cysteinyl)pyruvic acid O-phosphothioketal modification is found at cysteine 116. UDP-N-acetyl-alpha-D-glucosamine-binding positions include 121–125 (RPIDL), aspartate 306, and isoleucine 328.

This sequence belongs to the EPSP synthase family. MurA subfamily.

It is found in the cytoplasm. It catalyses the reaction phosphoenolpyruvate + UDP-N-acetyl-alpha-D-glucosamine = UDP-N-acetyl-3-O-(1-carboxyvinyl)-alpha-D-glucosamine + phosphate. It functions in the pathway cell wall biogenesis; peptidoglycan biosynthesis. In terms of biological role, cell wall formation. Adds enolpyruvyl to UDP-N-acetylglucosamine. The protein is UDP-N-acetylglucosamine 1-carboxyvinyltransferase 2 of Streptococcus mutans serotype c (strain ATCC 700610 / UA159).